Here is a 358-residue protein sequence, read N- to C-terminus: Alpha-2-HS-glycoprotein (358 aa).

The N-terminal stretch at methionine 1–serine 18 is a signal peptide. Residues glutamate 27–glutamate 133 form the Cystatin fetuin-A-type 1 domain. 6 disulfide bridges follow: cysteine 32/cysteine 349, cysteine 89/cysteine 100, cysteine 114/cysteine 132, cysteine 146/cysteine 149, cysteine 208/cysteine 218, and cysteine 229/cysteine 246. Asparagine 99 carries N-linked (GlcNAc...) asparagine glycosylation. A Phosphoserine modification is found at serine 134. Residue threonine 135 is modified to Phosphothreonine. At serine 138 the chain carries Phosphoserine. The Cystatin fetuin-A-type 2 domain maps to lysine 144–valine 254. N-linked (GlcNAc...) asparagine glycans are attached at residues asparagine 156 and asparagine 176. A disordered region spans residues leucine 257 to serine 288. Residues asparagine 267–proline 282 are compositionally biased toward pro residues. A phosphoserine mark is found at serine 318 and serine 320. Positions serine 320–proline 350 are disordered.

It belongs to the fetuin family. In terms of processing, phosphorylated by FAM20C in the extracellular medium. In terms of tissue distribution, bone marrow.

It is found in the secreted. The sequence is that of Alpha-2-HS-glycoprotein (AHSG) from Cavia porcellus (Guinea pig).